Consider the following 511-residue polypeptide: Apolipoprotein N-acyltransferase (511 aa).

6 consecutive transmembrane segments (helical) span residues 7-29, 58-78, 90-110, 125-145, 163-183, and 192-212; these read PGWPGHLLALAAGALTPLALAPF, GWWYGFGAFGAGTSWIYVSIH, LLMLGFTAGVAFFFALPAWLW, LAFAALWLALELFRSWFLTGF, VPVGGVWLSSFVIALSAALLV, and GASLLLGLVLLLGPWAAGLYL. A CN hydrolase domain is found at 230–470; sequence IQGNIAQELK…QGILRGEVIP (241 aa). Catalysis depends on E269, which acts as the Proton acceptor. K330 is an active-site residue. C382 acts as the Nucleophile in catalysis. Residues 482 to 502 form a helical membrane-spanning segment; the sequence is VWPLAGLAGVLLLWALLGRQL.

It belongs to the CN hydrolase family. Apolipoprotein N-acyltransferase subfamily.

It is found in the cell inner membrane. It carries out the reaction N-terminal S-1,2-diacyl-sn-glyceryl-L-cysteinyl-[lipoprotein] + a glycerophospholipid = N-acyl-S-1,2-diacyl-sn-glyceryl-L-cysteinyl-[lipoprotein] + a 2-acyl-sn-glycero-3-phospholipid + H(+). It functions in the pathway protein modification; lipoprotein biosynthesis (N-acyl transfer). Functionally, catalyzes the phospholipid dependent N-acylation of the N-terminal cysteine of apolipoprotein, the last step in lipoprotein maturation. This chain is Apolipoprotein N-acyltransferase, found in Pseudomonas aeruginosa (strain LESB58).